The following is a 1619-amino-acid chain: ATP-dependent helicase ULS1 (1619 aa).

An SUMO interacting motif; type a 1 motif is present at residues 7–10 (IDLT). The segment covering 86 to 102 (STFNNEKSSNEVKQQQV) has biased composition (polar residues). Disordered stretches follow at residues 86–123 (STFNNEKSSNEVKQQQVLKEETMGSSNDEKKTQESSPS), 200–279 (NNKP…VESS), 347–371 (PILPSKNMDHTTHNSHDSEQKNSSI), and 429–450 (SGSNSIPTSETDAQSSSSSVLQ). Basic and acidic residues predominate over residues 103-118 (LKEETMGSSNDEKKTQ). Position 121 is a phosphoserine (Ser121). Residues 200-210 (NNKPSQQQFSD) show a composition bias toward polar residues. A compositionally biased stretch (basic and acidic residues) spans 211 to 226 (PETKDNSLKSENKDQI). Composition is skewed to polar residues over residues 242–259 (SAFQDSETQNNSKNTIPN) and 269–279 (LPSNLSSVESS). The segment covering 353–366 (NMDHTTHNSHDSEQ) has biased composition (basic and acidic residues). Residues 371–378 (IIILSDED) carry the SUMO interacting motif; type b 1 motif. Positions 470-473 (LDTL) match the SUMO interacting motif; type a 2 motif. An SUMO interacting motif; type b 2 motif is present at residues 543–550 (ILVDEAEN). In terms of domain architecture, Helicase ATP-binding spans 956-1157 (QVENSAKKGG…YSLIRFLRIP (202 aa)). 969–976 (DDMGLGKT) serves as a coordination point for ATP. The RING-type zinc-finger motif lies at 1330-1386 (CFWCMEQLEPEAMSVLTGCGHLICDTCIEPFIEESSMLPQAKKTKGGAFAIPCKDCQ). In terms of domain architecture, Helicase C-terminal spans 1447-1606 (QCIQVIQRVF…GKIKEVNSLG (160 aa)).

The protein belongs to the SNF2/RAD54 helicase family. In terms of assembly, interacts with CDC3, CDC11, EBP2, SIR4, UBC4 and SUMO/SMT3.

It localises to the nucleus. In terms of biological role, ATP-dependent helicase involved mating type switching and in silencing interference through its interaction with the silencing regulator SIR4. Cooperates with UBC4 and UBC5 to mediate ubiquitination of SUMO conjugates. The chain is ATP-dependent helicase ULS1 (ULS1) from Saccharomyces cerevisiae (strain ATCC 204508 / S288c) (Baker's yeast).